The following is a 323-amino-acid chain: 4-hydroxy-3-methylbut-2-enyl diphosphate reductase (323 aa).

Cysteine 12 lines the [4Fe-4S] cluster pocket. The (2E)-4-hydroxy-3-methylbut-2-enyl diphosphate site is built by histidine 43 and histidine 81. Dimethylallyl diphosphate contacts are provided by histidine 43 and histidine 81. Residues histidine 43 and histidine 81 each coordinate isopentenyl diphosphate. Cysteine 103 provides a ligand contact to [4Fe-4S] cluster. Histidine 131 lines the (2E)-4-hydroxy-3-methylbut-2-enyl diphosphate pocket. Dimethylallyl diphosphate is bound at residue histidine 131. An isopentenyl diphosphate-binding site is contributed by histidine 131. Glutamate 133 acts as the Proton donor in catalysis. Threonine 170 contributes to the (2E)-4-hydroxy-3-methylbut-2-enyl diphosphate binding site. Cysteine 198 serves as a coordination point for [4Fe-4S] cluster. Serine 226, asparagine 228, and serine 271 together coordinate (2E)-4-hydroxy-3-methylbut-2-enyl diphosphate. Residues serine 226, asparagine 228, and serine 271 each coordinate dimethylallyl diphosphate. 3 residues coordinate isopentenyl diphosphate: serine 226, asparagine 228, and serine 271.

Belongs to the IspH family. The cofactor is [4Fe-4S] cluster.

It carries out the reaction isopentenyl diphosphate + 2 oxidized [2Fe-2S]-[ferredoxin] + H2O = (2E)-4-hydroxy-3-methylbut-2-enyl diphosphate + 2 reduced [2Fe-2S]-[ferredoxin] + 2 H(+). The enzyme catalyses dimethylallyl diphosphate + 2 oxidized [2Fe-2S]-[ferredoxin] + H2O = (2E)-4-hydroxy-3-methylbut-2-enyl diphosphate + 2 reduced [2Fe-2S]-[ferredoxin] + 2 H(+). It functions in the pathway isoprenoid biosynthesis; dimethylallyl diphosphate biosynthesis; dimethylallyl diphosphate from (2E)-4-hydroxy-3-methylbutenyl diphosphate: step 1/1. The protein operates within isoprenoid biosynthesis; isopentenyl diphosphate biosynthesis via DXP pathway; isopentenyl diphosphate from 1-deoxy-D-xylulose 5-phosphate: step 6/6. Functionally, catalyzes the conversion of 1-hydroxy-2-methyl-2-(E)-butenyl 4-diphosphate (HMBPP) into a mixture of isopentenyl diphosphate (IPP) and dimethylallyl diphosphate (DMAPP). Acts in the terminal step of the DOXP/MEP pathway for isoprenoid precursor biosynthesis. In Lysinibacillus sphaericus (strain C3-41), this protein is 4-hydroxy-3-methylbut-2-enyl diphosphate reductase.